The chain runs to 306 residues: Ornithine carbamoyltransferase (306 aa).

Carbamoyl phosphate contacts are provided by residues 53–56, glutamine 80, arginine 104, and 131–134; these read STRT and HPCQ. Residues asparagine 162, aspartate 219, and 223–224 contribute to the L-ornithine site; that span reads SM. Residues 259–260 and arginine 287 contribute to the carbamoyl phosphate site; that span reads CL.

Belongs to the aspartate/ornithine carbamoyltransferase superfamily. OTCase family.

Its subcellular location is the cytoplasm. The enzyme catalyses carbamoyl phosphate + L-ornithine = L-citrulline + phosphate + H(+). Its pathway is amino-acid biosynthesis; L-arginine biosynthesis; L-arginine from L-ornithine and carbamoyl phosphate: step 1/3. Its function is as follows. Reversibly catalyzes the transfer of the carbamoyl group from carbamoyl phosphate (CP) to the N(epsilon) atom of ornithine (ORN) to produce L-citrulline. This is Ornithine carbamoyltransferase from Acinetobacter baylyi (strain ATCC 33305 / BD413 / ADP1).